A 651-amino-acid chain; its full sequence is Aspartate--tRNA ligase, mitochondrial (651 aa).

A mitochondrion-targeting transit peptide spans 1 to 44 (MFCWLSRLCGELSTPTRRTTQLIWSSAARSMVLSSQRIPELSSF). T216 bears the Phosphothreonine mark. Phosphoserine is present on S239. The interval 241–244 (QQFK) is aspartate. Residue R263 participates in L-aspartate binding. 263–265 (RDE) provides a ligand contact to ATP. K379 is subject to N6-acetyllysine. E532 contacts ATP. R539 lines the L-aspartate pocket. Residue 581 to 584 (GLDR) coordinates ATP.

It belongs to the class-II aminoacyl-tRNA synthetase family. Type 1 subfamily. In terms of assembly, homodimer.

The protein localises to the mitochondrion matrix. The protein resides in the mitochondrion membrane. The catalysed reaction is tRNA(Asp) + L-aspartate + ATP = L-aspartyl-tRNA(Asp) + AMP + diphosphate. Catalyzes the attachment of aspartate to tRNA(Asp) in a two-step reaction: aspartate is first activated by ATP to form Asp-AMP and then transferred to the acceptor end of tRNA(Asp). The chain is Aspartate--tRNA ligase, mitochondrial (DARS2) from Bos taurus (Bovine).